We begin with the raw amino-acid sequence, 212 residues long: Glycerol-3-phosphate acyltransferase (212 aa).

A run of 4 helical transmembrane segments spans residues 3 to 23, 78 to 98, 115 to 135, and 155 to 177; these read ILLAALVAYLIGSVSFAVVVS, DVAVACVAIAVFLGHLYPVFF, AVHPVLGLATALTWLIVAFFF, and FLFGTSHNPVAWAVLAMSVLLVW.

Belongs to the PlsY family. Probably interacts with PlsX.

It localises to the cell inner membrane. It carries out the reaction an acyl phosphate + sn-glycerol 3-phosphate = a 1-acyl-sn-glycero-3-phosphate + phosphate. Its pathway is lipid metabolism; phospholipid metabolism. In terms of biological role, catalyzes the transfer of an acyl group from acyl-phosphate (acyl-PO(4)) to glycerol-3-phosphate (G3P) to form lysophosphatidic acid (LPA). This enzyme utilizes acyl-phosphate as fatty acyl donor, but not acyl-CoA or acyl-ACP. This is Glycerol-3-phosphate acyltransferase from Burkholderia ambifaria (strain ATCC BAA-244 / DSM 16087 / CCUG 44356 / LMG 19182 / AMMD) (Burkholderia cepacia (strain AMMD)).